We begin with the raw amino-acid sequence, 115 residues long: Large ribosomal subunit protein uL22 (115 aa).

Belongs to the universal ribosomal protein uL22 family. In terms of assembly, part of the 50S ribosomal subunit.

Functionally, this protein binds specifically to 23S rRNA; its binding is stimulated by other ribosomal proteins, e.g. L4, L17, and L20. It is important during the early stages of 50S assembly. It makes multiple contacts with different domains of the 23S rRNA in the assembled 50S subunit and ribosome. Its function is as follows. The globular domain of the protein is located near the polypeptide exit tunnel on the outside of the subunit, while an extended beta-hairpin is found that lines the wall of the exit tunnel in the center of the 70S ribosome. This chain is Large ribosomal subunit protein uL22, found in Lactococcus lactis subsp. lactis (strain IL1403) (Streptococcus lactis).